The chain runs to 364 residues: Probable transcription factor At4g00390 (364 aa).

Positions 1-149 (MTKKLDPPTA…STKRVKKDEE (149 aa)) are disordered. Residues 13 to 32 (SDEDDVETSEDDSSSSEEDE) are compositionally biased toward acidic residues. The segment covering 39–80 (ATTAAAPAKSTAVSAATPAKSTSVSAAAPSKSTAVSAAADSD) has biased composition (low complexity). Positions 81 to 93 (SGSESETDSDSES) are enriched in acidic residues.

The protein belongs to the GeBP family.

The polypeptide is Probable transcription factor At4g00390 (Arabidopsis thaliana (Mouse-ear cress)).